Reading from the N-terminus, the 227-residue chain is MMAAGAALALALWLLMPPVEVGGAGPPPIQDGEFTFLLPAGRKQCFYQSAPANASLETEYQVIGGAGLDVDFTLESPQGVLLVSESRKADGVHTVEPTEAGDYKLCFDNSFSTISEKLVFFELIFDSLQDDEEVEGWAEAVEPEEMLDVKMEDIKESIETMRTRLERSIQMLTLLRAFEARDRNLQEGNLERVNFWSAVNVAVLLLVAVLQVCTLKRFFQDKRPVPT.

An N-terminal signal peptide occupies residues 1 to 23; it reads MMAAGAALALALWLLMPPVEVGG. Over 24-194 the chain is Extracellular; that stretch reads AGPPPIQDGE…LQEGNLERVN (171 aa). One can recognise a GOLD domain in the interval 43–125; sequence KQCFYQSAPA…EKLVFFELIF (83 aa). Positions 145-170 form a coiled coil; that stretch reads EMLDVKMEDIKESIETMRTRLERSIQ. Residues 195–215 traverse the membrane as a helical segment; it reads FWSAVNVAVLLLVAVLQVCTL. Residues 216-227 lie on the Cytoplasmic side of the membrane; the sequence is KRFFQDKRPVPT. Residues 218 to 219 carry the COPII vesicle coat-binding motif; that stretch reads FF. The COPI vesicle coat-binding motif lies at 218 to 227; it reads FFQDKRPVPT.

It belongs to the EMP24/GP25L family. Homodimer in endoplasmic reticulum, endoplasmic reticulum-Golgi intermediate compartment and cis-Golgi network. Interacts with IL1RL1. Interacts with RNF26; this interaction is important to modulate innate immune signaling through the cGAS-STING pathway. Widely expressed.

It localises to the cell membrane. The protein resides in the endoplasmic reticulum membrane. It is found in the golgi apparatus. Its subcellular location is the cis-Golgi network membrane. The protein localises to the endoplasmic reticulum-Golgi intermediate compartment membrane. Functionally, potential role in vesicular protein trafficking, mainly in the early secretory pathway. May act as a cargo receptor at the lumenal side for incorporation of secretory cargo molecules into transport vesicles and may be involved in vesicle coat formation at the cytoplasmic side. Plays a positive role in IL-33-mediated IL-8 and IL-6 production by interacting with interleukin-33 receptor IL1RL1. Also plays a role in the modulation of innate immune signaling through the cGAS-STING pathway by interacting with RNF26. The sequence is that of Transmembrane emp24 domain-containing protein 1 (TMED1) from Homo sapiens (Human).